A 51-amino-acid polypeptide reads, in one-letter code: UPF0391 membrane protein Mbur_2216 (51 aa).

The next 2 membrane-spanning stretches (helical) occupy residues 1–21 and 31–51; these read MADLIGLAIVFLIFALVAYVL and MTIAKWLVIIFIVLAIITILL.

This sequence belongs to the UPF0391 family.

The protein resides in the cell membrane. The protein is UPF0391 membrane protein Mbur_2216 of Methanococcoides burtonii (strain DSM 6242 / NBRC 107633 / OCM 468 / ACE-M).